Reading from the N-terminus, the 778-residue chain is Serine/threonine-protein kinase BRSK1 (778 aa).

A compositionally biased stretch (gly residues) spans 1-12 (MSSGAKEGGGGS). Residues 1-29 (MSSGAKEGGGGSPAYHLPHPHPHPPQHAQ) are disordered. The 252-residue stretch at 34–285 (YRLEKTLGKG…LEQIQKHPWY (252 aa)) folds into the Protein kinase domain. ATP-binding positions include 40-48 (LGKGQTGLV) and Lys-63. The active-site Proton acceptor is Asp-156. Position 189 is a phosphothreonine; by LKB1 (Thr-189). One can recognise a UBA domain in the interval 314–356 (ELDPDVLESMASLGCFRDRERLHRELRSEEENQEKMIYYLLLD). Over residues 362–383 (PSCEDQDLPPRNDVDPPRKRVD) the composition is skewed to basic and acidic residues. The disordered stretch occupies residues 362 to 548 (PSCEDQDLPP…SPGGGVGGAA (187 aa)). Phosphoserine is present on residues Ser-399, Ser-443, Ser-447, and Ser-450. Low complexity predominate over residues 430–457 (SRSVSGASTGLSSSPLSSPRSPVFSFSP). An omega-N-methylarginine mark is found at Arg-466, Arg-481, Arg-484, and Arg-498. Positions 491-508 (QPPPPSARSTPLPGPPGS) are enriched in pro residues. Ser-508 bears the Phosphoserine mark. Residues 509-533 (PRSSGGTPLHSPLHTPRASPTGTPG) show a composition bias toward low complexity. Residue Arg-525 is modified to Omega-N-methylarginine. Phosphothreonine is present on residues Thr-529 and Thr-535. Arg-550 carries the post-translational modification Omega-N-methylarginine. Thr-583 bears the Phosphothreonine mark. 3 positions are modified to phosphoserine: Ser-586, Ser-587, and Ser-601. Residues 719–778 (QPSVQALADEKNGAQTRPAGAPPRSLQPPPGRPDPELSSSPRRGPPKDKKLLATNGTPLP) are disordered.

It belongs to the protein kinase superfamily. CAMK Ser/Thr protein kinase family. SNF1 subfamily. It depends on Mg(2+) as a cofactor. Phosphorylated at Thr-189 by STK11/LKB1 in complex with STE20-related adapter-alpha (STRADA) pseudo kinase and CAB39. Not phosphorylated at Thr-189 by CaMKK2. In contrast, it is phosphorylated and activated by CaMKK1. May be inactivated via dephosphorylation of Thr-189 by PP2C. In terms of tissue distribution, widely expressed, with highest levels in brain and testis. Protein levels remain constant throughout the cell cycle.

Its subcellular location is the cytoplasm. It localises to the nucleus. The protein localises to the cytoskeleton. The protein resides in the microtubule organizing center. It is found in the centrosome. Its subcellular location is the synapse. It localises to the presynaptic active zone. The protein localises to the cytoplasmic vesicle. The protein resides in the secretory vesicle. It is found in the synaptic vesicle. The catalysed reaction is L-seryl-[protein] + ATP = O-phospho-L-seryl-[protein] + ADP + H(+). It carries out the reaction L-threonyl-[protein] + ATP = O-phospho-L-threonyl-[protein] + ADP + H(+). The enzyme catalyses L-seryl-[tau protein] + ATP = O-phospho-L-seryl-[tau protein] + ADP + H(+). It catalyses the reaction L-threonyl-[tau protein] + ATP = O-phospho-L-threonyl-[tau protein] + ADP + H(+). With respect to regulation, activated by phosphorylation on Thr-189 by STK11/LKB1. In terms of biological role, serine/threonine-protein kinase that plays a key role in polarization of neurons and centrosome duplication. Phosphorylates CDC25B, CDC25C, MAPT/TAU, RIMS1, TUBG1, TUBG2 and WEE1. Following phosphorylation and activation by STK11/LKB1, acts as a key regulator of polarization of cortical neurons, probably by mediating phosphorylation of microtubule-associated proteins such as MAPT/TAU at 'Thr-529' and 'Ser-579'. Also regulates neuron polarization by mediating phosphorylation of WEE1 at 'Ser-642' in postmitotic neurons, leading to down-regulate WEE1 activity in polarized neurons. In neurons, localizes to synaptic vesicles and plays a role in neurotransmitter release, possibly by phosphorylating RIMS1. Also acts as a positive regulator of centrosome duplication by mediating phosphorylation of gamma-tubulin (TUBG1 and TUBG2) at 'Ser-131', leading to translocation of gamma-tubulin and its associated proteins to the centrosome. Involved in the UV-induced DNA damage checkpoint response, probably by inhibiting CDK1 activity through phosphorylation and activation of WEE1, and inhibition of CDC25B and CDC25C. The protein is Serine/threonine-protein kinase BRSK1 (BRSK1) of Homo sapiens (Human).